Here is a 296-residue protein sequence, read N- to C-terminus: Nucleotide-binding protein M28_Spy0517 (296 aa).

ATP is bound at residue 13-20 (GMSGAGKT). 63–66 (DMRS) serves as a coordination point for GTP.

The protein belongs to the RapZ-like family.

Its function is as follows. Displays ATPase and GTPase activities. The sequence is that of Nucleotide-binding protein M28_Spy0517 from Streptococcus pyogenes serotype M28 (strain MGAS6180).